The sequence spans 267 residues: Sulfate transporter CysZ (267 aa).

The next 4 membrane-spanning stretches (helical) occupy residues 29-49 (FVIM…WLFI), 73-93 (ILLI…FTTL), 149-169 (IILF…PIIV), and 212-232 (GLVM…PVAV).

This sequence belongs to the CysZ family.

The protein resides in the cell inner membrane. Its function is as follows. High affinity, high specificity proton-dependent sulfate transporter, which mediates sulfate uptake. Provides the sulfur source for the cysteine synthesis pathway. This chain is Sulfate transporter CysZ, found in Pasteurella multocida (strain Pm70).